The sequence spans 107 residues: Vasopressin-neurophysin 2 (107 aa).

Cys-1 and Cys-6 are disulfide-bonded. Residue Gly-9 is modified to Glycine amide. 7 disulfide bridges follow: Cys-22/Cys-66, Cys-25/Cys-39, Cys-33/Cys-56, Cys-40/Cys-46, Cys-73/Cys-85, Cys-79/Cys-97, and Cys-86/Cys-91.

Belongs to the vasopressin/oxytocin family. As to quaternary structure, interacts with vasopressin receptors V1bR/AVPR1B (Ki=85 pM), V1aR/AVPR1A (Ki=0.6 nM) and V2R/AVPR2 (Ki=4.9 nM). Interacts with oxytocin receptor (OXTR) (Ki=110 nM).

The protein resides in the secreted. Its function is as follows. Neurophysin 2 specifically binds vasopressin. Vasopressin has a direct antidiuretic action on the kidney, it also causes vasoconstriction of the peripheral vessels. Acts by binding to vasopressin receptors (V1bR/AVPR1B, V1aR/AVPR1A, and V2R/AVPR2). In Balaenoptera physalus (Fin whale), this protein is Vasopressin-neurophysin 2 (AVP).